The chain runs to 368 residues: Phosphoribosylformylglycinamidine cyclo-ligase (368 aa).

It belongs to the AIR synthase family.

It localises to the cytoplasm. The enzyme catalyses 2-formamido-N(1)-(5-O-phospho-beta-D-ribosyl)acetamidine + ATP = 5-amino-1-(5-phospho-beta-D-ribosyl)imidazole + ADP + phosphate + H(+). The protein operates within purine metabolism; IMP biosynthesis via de novo pathway; 5-amino-1-(5-phospho-D-ribosyl)imidazole from N(2)-formyl-N(1)-(5-phospho-D-ribosyl)glycinamide: step 2/2. The protein is Phosphoribosylformylglycinamidine cyclo-ligase of Chelativorans sp. (strain BNC1).